The following is a 310-amino-acid chain: Ceramide synthase LOH1 (310 aa).

6 helical membrane-spanning segments follow: residues 16 to 36, 85 to 105, 131 to 151, 157 to 177, 216 to 236, and 260 to 280; these read SFPT…FPTI, CIYY…EPWF, FLYM…VFWE, FGVS…SYIC, FVLF…FWIL, and YMFN…WVLI. The 214-residue stretch at 76-289 folds into the TLC domain; the sequence is RKFKESAWKC…IYRMLVKQVQ (214 aa). A phosphoserine mark is found at S300 and S302.

Expressed ubiquitously at high levels. Not observed in pollen.

It localises to the endoplasmic reticulum membrane. The catalysed reaction is (4R)-hydroxysphinganine + a fatty acyl-CoA = an N-acyl-(4R)-4-hydroxysphinganine + CoA + H(+). The enzyme catalyses hexacosanoyl-CoA + (4R)-hydroxysphinganine = N-hexacosanoyl-(4R)-hydroxysphinganine + CoA + H(+). It catalyses the reaction tetracosanoyl-CoA + (4R)-hydroxysphinganine = N-tetracosanoyl-(4R)-hydroxysphinganine + CoA + H(+). It functions in the pathway sphingolipid metabolism. With respect to regulation, inhibited by the mycotoxin fumonisin B(1), a sphingosine analog mycotoxins produced by pathogenic fungi. Repressed by divalent cation such as magnesium Mg(2+), copper Cu(2+), zinc Zn(2+), manganese Mn(2+), calcium Ca(2+) and cobalt Co(2+). Essential for plant growth, promotes cell division in root meristems. Catalyzes the biosynthesis of ceramide sphingolipids with C(16) to C(28) fatty acids, structural membrane lipids involved in membrane trafficking (e.g. early endosomes) and cell polarity (e.g. polar auxin transport related proteins); mostly active with t18:0 and saturated very long saturated fatty acids (C24:0 and C26:0), such as long-chain base (LCB) phytosphingosine (t18:0), lignoceroyl- and hexacosanoyl-CoAs. Mediates resistance to sphinganine-analog mycotoxins (SAMs, e.g. fumonisin B(1)) by restoring the sphingolipid biosynthesis. Could salvage the transport of GPI-anchored proteins from the endoplasmic reticulum to the Golgi apparatus in ceramides-depleted cells after SAM exposure. May prevent precocious cell death by delaying PR1 accumulation during aging. Contributes to hypoxic conditions tolerance (e.g. submergences), especially in the dark, by promoting the formation of very-long-chain (VLC) ceramide species (22:1, 24:1 and 26:1) and of VLC unsaturated ceramides, which are modulating CTR1-mediated ethylene signaling leading to endoplasmic reticulum (ER)-to-nucleus translocation of EIN2 and EIN3. This is Ceramide synthase LOH1 from Arabidopsis thaliana (Mouse-ear cress).